The primary structure comprises 275 residues: Formamidopyrimidine-DNA glycosylase (275 aa).

The active-site Schiff-base intermediate with DNA is Pro2. Glu3 acts as the Proton donor in catalysis. The active-site Proton donor; for beta-elimination activity is the Lys60. 2 residues coordinate DNA: His93 and Arg112. The FPG-type zinc-finger motif lies at 240 to 274 (FVYGRKDEPCKKCGSPIEKTVVGGRGTHFCIKCQK). Arg264 functions as the Proton donor; for delta-elimination activity in the catalytic mechanism.

Belongs to the FPG family. Monomer. The cofactor is Zn(2+).

The enzyme catalyses Hydrolysis of DNA containing ring-opened 7-methylguanine residues, releasing 2,6-diamino-4-hydroxy-5-(N-methyl)formamidopyrimidine.. It catalyses the reaction 2'-deoxyribonucleotide-(2'-deoxyribose 5'-phosphate)-2'-deoxyribonucleotide-DNA = a 3'-end 2'-deoxyribonucleotide-(2,3-dehydro-2,3-deoxyribose 5'-phosphate)-DNA + a 5'-end 5'-phospho-2'-deoxyribonucleoside-DNA + H(+). In terms of biological role, involved in base excision repair of DNA damaged by oxidation or by mutagenic agents. Acts as a DNA glycosylase that recognizes and removes damaged bases. Has a preference for oxidized purines, such as 7,8-dihydro-8-oxoguanine (8-oxoG). Has AP (apurinic/apyrimidinic) lyase activity and introduces nicks in the DNA strand. Cleaves the DNA backbone by beta-delta elimination to generate a single-strand break at the site of the removed base with both 3'- and 5'-phosphates. In Bacillus licheniformis (strain ATCC 14580 / DSM 13 / JCM 2505 / CCUG 7422 / NBRC 12200 / NCIMB 9375 / NCTC 10341 / NRRL NRS-1264 / Gibson 46), this protein is Formamidopyrimidine-DNA glycosylase.